Here is a 481-residue protein sequence, read N- to C-terminus: RuvB-like helicase 2 (481 aa).

73 to 80 contributes to the ATP binding site; that stretch reads GEPSTGKT. Positions 453 to 481 are disordered; the sequence is EEVERDPAAGGGAKRRVEGGGGDAQPMEH.

This sequence belongs to the RuvB family. Forms homohexameric rings. May form a dodecamer with rept made of two stacked hexameric rings. Component of the chromatin remodeling Ino80 complex. Interacts with Myc and pont. Higher expression occurs in primordia of mesoderm, anterior and posterior midgut and cephalic furrow early in gastrulation, as well as in endoderm and mesoderm lineages during germ band extension. Later in development expression is only maintained in endoderm cells. Expressed in thoracic and abdominal segment neural precursors of all embryonic chordotonal organs.

The protein localises to the nucleus. It catalyses the reaction ATP + H2O = ADP + phosphate + H(+). In terms of biological role, acts as a transcriptional coactivator in Wg signaling caused by altered arm signaling. Pont and rept interfere antagonistically with nuclear arm signaling function, and are required to enhance or reduce arm activity, respectively. Also an essential cofactor for the normal function of Myc; required for cellular proliferation and growth. Functionally, proposed core component of the chromatin remodeling Ino80 complex which is involved in transcriptional regulation, DNA replication and probably DNA repair. In Drosophila melanogaster (Fruit fly), this protein is RuvB-like helicase 2.